The following is a 443-amino-acid chain: ATP-dependent protease ATPase subunit HslU (443 aa).

ATP contacts are provided by residues V18 and 60–65 (GVGKTE). The segment at 136 to 158 (LPPPRDFNEDSQRTNADSSTRQL) is disordered. Polar residues predominate over residues 148-157 (RTNADSSTRQ). Residues D256, E321, and R393 each contribute to the ATP site.

Belongs to the ClpX chaperone family. HslU subfamily. In terms of assembly, a double ring-shaped homohexamer of HslV is capped on each side by a ring-shaped HslU homohexamer. The assembly of the HslU/HslV complex is dependent on binding of ATP.

It is found in the cytoplasm. Functionally, ATPase subunit of a proteasome-like degradation complex; this subunit has chaperone activity. The binding of ATP and its subsequent hydrolysis by HslU are essential for unfolding of protein substrates subsequently hydrolyzed by HslV. HslU recognizes the N-terminal part of its protein substrates and unfolds these before they are guided to HslV for hydrolysis. In Marinobacter nauticus (strain ATCC 700491 / DSM 11845 / VT8) (Marinobacter aquaeolei), this protein is ATP-dependent protease ATPase subunit HslU.